The sequence spans 642 residues: Threonine--tRNA ligase (642 aa).

A TGS domain is found at methionine 1 to threonine 61. Residues aspartate 243 to proline 534 are catalytic. Residues cysteine 334, histidine 385, and histidine 511 each coordinate Zn(2+).

It belongs to the class-II aminoacyl-tRNA synthetase family. In terms of assembly, homodimer. The cofactor is Zn(2+).

Its subcellular location is the cytoplasm. It catalyses the reaction tRNA(Thr) + L-threonine + ATP = L-threonyl-tRNA(Thr) + AMP + diphosphate + H(+). Catalyzes the attachment of threonine to tRNA(Thr) in a two-step reaction: L-threonine is first activated by ATP to form Thr-AMP and then transferred to the acceptor end of tRNA(Thr). Also edits incorrectly charged L-seryl-tRNA(Thr). In Enterobacter sp. (strain 638), this protein is Threonine--tRNA ligase.